An 830-amino-acid chain; its full sequence is Nucleolar complex-associated protein 3 (830 aa).

Disordered regions lie at residues 1–22, 67–86, 112–169, 391–436, and 802–830; these read MGKN…DVAE, KYEE…GNGE, KSKL…EETP, GKPN…KIRD, and LQSE…KKQI. Coiled-coil stretches lie at residues 61-81 and 111-156; these read VMTV…LQEE and KKSK…HEKD. A compositionally biased stretch (basic and acidic residues) spans 67 to 84; sequence KYEEERSKRKTLQEEKGN. A compositionally biased stretch (acidic residues) spans 118-129; that stretch reads AETDEAEKDVLE. Residues 130-140 show a composition bias toward basic and acidic residues; the sequence is DEHVLNKSQRR. Positions 138–145 match the Nuclear localization signal 1 motif; the sequence is QRREKAKK. The segment covering 141–150 has biased composition (basic residues); that stretch reads EKAKKSKREA. Acidic residues predominate over residues 159–168; the sequence is DEILQEEEET. The span at 391-400 shows a compositional bias: basic and acidic residues; sequence GKPNKEDEHN. Residues 400 to 429 adopt a coiled-coil conformation; it reads NKKYKKNNKRKTQEEQNQVQENERKKSKKD. The Nuclear localization signal 2 signature appears at 408-415; it reads KRKTQEEQ. A compositionally biased stretch (basic and acidic residues) spans 420–436; that stretch reads ENERKKSKKDMMSKIRD. The Nuclear localization signal 3 motif lies at 806-813; it reads EKKPLKKQ. Residues 817–830 are compositionally biased toward basic residues; it reads VKKKLKNPKSKKQI.

The protein belongs to the CBF/MAK21 family. Component of nucleolar complexes. Interacts with RBL and NOC2 in both the nucleolus and nucleoplasm.

It localises to the nucleus. The protein localises to the nucleolus. The protein resides in the nucleoplasm. Its function is as follows. May be required for synthesis of 60S ribosomal subunits and the transport of pre-ribosomes from the nucleoplasm to the cytoplasm. Also required for initiation of DNA replication. This chain is Nucleolar complex-associated protein 3, found in Arabidopsis thaliana (Mouse-ear cress).